A 41-amino-acid chain; its full sequence is Photosystem II reaction center protein L (41 aa).

The chain crosses the membrane as a helical span at residues 20 to 40; it reads SLYLGLLLVFVVGLLFSSYFL.

Belongs to the PsbL family. In terms of assembly, PSII is composed of 1 copy each of membrane proteins PsbA, PsbB, PsbC, PsbD, PsbE, PsbF, PsbH, PsbI, PsbJ, PsbK, PsbL, PsbM, PsbT, PsbX, PsbY, PsbZ, Psb30/Ycf12, peripheral proteins PsbO, CyanoQ (PsbQ), PsbU, PsbV and a large number of cofactors. It forms dimeric complexes.

Its subcellular location is the cellular thylakoid membrane. Functionally, one of the components of the core complex of photosystem II (PSII). PSII is a light-driven water:plastoquinone oxidoreductase that uses light energy to abstract electrons from H(2)O, generating O(2) and a proton gradient subsequently used for ATP formation. It consists of a core antenna complex that captures photons, and an electron transfer chain that converts photonic excitation into a charge separation. This subunit is found at the monomer-monomer interface and is required for correct PSII assembly and/or dimerization. The sequence is that of Photosystem II reaction center protein L from Synechococcus sp. (strain JA-3-3Ab) (Cyanobacteria bacterium Yellowstone A-Prime).